An 86-amino-acid polypeptide reads, in one-letter code: Putative defensin-like protein 189 (86 aa).

The N-terminal stretch at 1–28 (MKMAKSANEIGFITCLVVFLVLTGQSNG) is a signal peptide. 4 disulfides stabilise this stretch: cysteine 39-cysteine 85, cysteine 52-cysteine 71, cysteine 57-cysteine 80, and cysteine 61-cysteine 82.

It belongs to the DEFL family.

It is found in the secreted. This Arabidopsis thaliana (Mouse-ear cress) protein is Putative defensin-like protein 189.